Reading from the N-terminus, the 2799-residue chain is E3 ubiquitin-protein ligase UBR5 (2799 aa).

Thr2 bears the N-acetylthreonine mark. A compositionally biased stretch (basic and acidic residues) spans Asp77–Asp88. The interval Asp77–Gln175 is disordered. Residues Gly89–Ser110 are compositionally biased toward polar residues. Ser110 is modified (phosphoserine). A compositionally biased stretch (gly residues) spans Gly135–Ser144. The UBA domain maps to Val184 to Arg226. Ser327 is modified (phosphoserine). A compositionally biased stretch (basic and acidic residues) spans Phe328–Asn347. The disordered stretch occupies residues Phe328–Ser352. Ser352 and Ser578 each carry phosphoserine. The segment at Pro579–Glu648 is disordered. The segment covering Lys583 to Lys604 has biased composition (basic and acidic residues). Phosphoserine is present on Ser612. Residues Ala614–Ser628 show a composition bias toward low complexity. Thr637 bears the Phosphothreonine mark. A phosphoserine mark is found at Ser808, Ser928, and Ser1018. Disordered regions lie at residues Ala999 to Pro1031 and Thr1052 to Val1075. Residues Val1017–Pro1031 show a composition bias toward pro residues. Over residues Thr1052–Pro1073 the composition is skewed to polar residues. Thr1115 and Thr1135 each carry phosphothreonine. The segment at Asp1177–Ala1245 adopts a UBR-type zinc-finger fold. 8 residues coordinate Zn(2+): Cys1179, Cys1196, Cys1199, Cys1208, Cys1211, Cys1215, His1216, and His1219. Residue Ser1227 is modified to Phosphoserine. Positions 1232, 1234, and 1240 each coordinate Zn(2+). The tract at residues Arg1299–Asp1318 is disordered. 4 positions are modified to phosphoserine: Ser1308, Ser1355, Ser1375, and Ser1481. Positions Ser1515–Ser1740 are disordered. Residues Ser1524 to Ser1537 show a composition bias toward low complexity. Over residues Tyr1538–Pro1553 the composition is skewed to polar residues. Ser1549 is modified (phosphoserine). Acidic residues-rich tracts occupy residues Glu1559–Val1574 and His1605–Leu1614. A compositionally biased stretch (polar residues) spans Asn1629 to Gly1638. Low complexity-rich tracts occupy residues Ser1641 to Val1657, Ser1668 to Ser1681, and Ala1726 to Ser1740. Thr1736 is modified (phosphothreonine). At Ser1741 the chain carries Phosphoserine. Tyr1746 bears the Phosphotyrosine mark. A Phosphoserine modification is found at Ser1780. The tract at residues Leu1859–Ala1890 is disordered. Over residues Ala1879–Ala1890 the composition is skewed to basic and acidic residues. Phosphothreonine is present on Thr1969. A disordered region spans residues Gly1984–Pro2021. Acidic residues predominate over residues Ile1985 to Thr1998. Phosphoserine occurs at positions 1990, 2026, and 2028. Thr2030 is modified (phosphothreonine). Ser2076 carries the post-translational modification Phosphoserine. Residues Arg2117–His2142 form a disordered region. Thr2213 carries the post-translational modification Phosphothreonine. Residues Ser2241 and Ser2289 each carry the phosphoserine modification. The disordered stretch occupies residues His2323–Ala2392. Basic and acidic residues-rich tracts occupy residues Asn2332 to Arg2348 and Ser2356 to Leu2368. A PABC domain is found at Pro2377–Arg2454. The region spanning Leu2462–Val2799 is the HECT domain. 3 positions are modified to phosphoserine: Ser2469, Ser2484, and Ser2486. The interval Val2473–Asp2493 is disordered. Cys2768 acts as the Glycyl thioester intermediate in catalysis.

The protein belongs to the UBR5 family. In terms of assembly, homotetramer; composed of a dimer of dimers. Associates with CDK9 and TFIIS/TCEA1 and forms a transcription regulatory complex made of CDK9, RNAP II, UBR5 and TFIIS/TCEA1 that can stimulate target gene transcription (e.g. gamma fibrinogen/FGG) by recruiting their promoters. Associates with the E3 ligase complex containing DYRK2, EDD/UBR5, DDB1 and DCAF1 proteins (EDVP complex). Binds TOPBP1. Interacts with PIH1D1. Interacts with CIB1. (Microbial infection) Interacts with human T-cell leukemia virus 1/HTLV-1 protein HBZ; this interaction modulates HBZ stability. Widely expressed. Most abundant in testis and expressed at high levels in brain, pituitary and kidney.

It localises to the nucleus. The protein localises to the cytoplasm. The catalysed reaction is S-ubiquitinyl-[E2 ubiquitin-conjugating enzyme]-L-cysteine + [acceptor protein]-L-lysine = [E2 ubiquitin-conjugating enzyme]-L-cysteine + N(6)-ubiquitinyl-[acceptor protein]-L-lysine.. It participates in protein modification; protein ubiquitination. In terms of biological role, E3 ubiquitin-protein ligase involved in different protein quality control pathways in the cytoplasm and nucleus. Mainly acts as a ubiquitin chain elongator that extends pre-ubiquitinated substrates. Component of the N-end rule pathway: ubiquitinates proteins bearing specific N-terminal residues that are destabilizing according to the N-end rule, leading to their degradation. Recognizes type-1 N-degrons, containing positively charged amino acids (Arg, Lys and His). Together with UBR4, part of a cytoplasm protein quality control pathway that prevents protein aggregation by catalyzing assembly of heterotypic 'Lys-11'-/'Lys-48'-linked branched ubiquitin chains on aggregated proteins, leading to substrate recognition by the segregase p97/VCP and degradation by the proteasome: UBR5 is probably branching multiple 'Lys-48'-linked chains of substrates initially modified with mixed conjugates by UBR4. Together with ITCH, catalyzes 'Lys-48'-/'Lys-63'-branched ubiquitination of TXNIP, leading to its degradation: UBR5 mediates branching of 'Lys-48'-linked chains of substrates initially modified with 'Lys-63'-linked conjugates by ITCH. Catalytic component of a nuclear protein quality control pathway that mediates ubiquitination and degradation of unpaired transcription factors (i.e. transcription factors that are not assembled into functional multiprotein complexes): specifically recognizes and binds degrons that are not accessible when transcription regulators are associated with their coactivators. Ubiquitinates various unpaired transcription regulator (MYC, SUPT4H1, SUPT5H, CDC20 and MCRS1), as well as ligand-bound nuclear receptors (ESR1, NR1H3, NR3C1, PGR, RARA, RXRA AND VDR) that are not associated with their nuclear receptor coactivators (NCOAs). Involved in maturation and/or transcriptional regulation of mRNA by mediating polyubiquitination and activation of CDK9. Also acts as a regulator of DNA damage response by acting as a suppressor of RNF168, an E3 ubiquitin-protein ligase that promotes accumulation of 'Lys-63'-linked histone H2A and H2AX at DNA damage sites, thereby acting as a guard against excessive spreading of ubiquitinated chromatin at damaged chromosomes. Regulates DNA topoisomerase II binding protein (TopBP1) in the DNA damage response. Ubiquitinates acetylated PCK1. Acts as a positive regulator of the canonical Wnt signaling pathway by mediating (1) ubiquitination and stabilization of CTNNB1, and (2) 'Lys-48'-linked ubiquitination and degradation of TLE3. Promotes disassembly of the mitotic checkpoint complex (MCC) from the APC/C complex by catalyzing ubiquitination of BUB1B, BUB3 and CDC20. Plays an essential role in extraembryonic development. Required for the maintenance of skeletal tissue homeostasis by acting as an inhibitor of hedgehog (HH) signaling. This is E3 ubiquitin-protein ligase UBR5 (UBR5) from Homo sapiens (Human).